Consider the following 242-residue polypeptide: Uridylate kinase (242 aa).

16–19 provides a ligand contact to ATP; that stretch reads KVSG. Gly58 provides a ligand contact to UMP. ATP-binding residues include Gly59 and Arg63. UMP is bound by residues Asp78 and 139–146; that span reads TGNPFCTT. ATP-binding residues include Thr166, Gln167, Tyr172, and Asp175.

It belongs to the UMP kinase family. In terms of assembly, homohexamer.

The protein resides in the cytoplasm. The enzyme catalyses UMP + ATP = UDP + ADP. The protein operates within pyrimidine metabolism; CTP biosynthesis via de novo pathway; UDP from UMP (UMPK route): step 1/1. With respect to regulation, inhibited by UTP. Its function is as follows. Catalyzes the reversible phosphorylation of UMP to UDP. This is Uridylate kinase from Rickettsia canadensis (strain McKiel).